The following is a 322-amino-acid chain: MLNSFKLSLQYILPKLWLTRLAGWGASKRAGWLTKLVIDLFVKYYKVDMTEAQKPDTASYRTFNDFFVRPLRDDVRPLNTDPNILVMPADGVISQLGRIEEEKILQAKGHNYSLEALLAGNYLMADKFRNGTFVTTYLSPRDYHRVHMPCNGILREMIYVPGDLFSVNHLTAQNVPNLFARNERVICLFDTEFGPMAQILVGATIVGSIETVWAGTITPPREGIIKRWTWPEGEHEGSVALLKGQEMGRFKLGSTVINLFAPGKVNLIASLASLSVTKIGQPLATSTETFVAPEVEPAPLPTEEIKAEHDASPLVDNKKDDT.

Catalysis depends on charge relay system; for autoendoproteolytic cleavage activity residues aspartate 90, histidine 147, and serine 254. The active-site Schiff-base intermediate with substrate; via pyruvic acid; for decarboxylase activity is the serine 254. Position 254 is a pyruvic acid (Ser); by autocatalysis (serine 254). Positions 295–322 (VEPAPLPTEEIKAEHDASPLVDNKKDDT) are disordered. Over residues 303 to 322 (EEIKAEHDASPLVDNKKDDT) the composition is skewed to basic and acidic residues.

Belongs to the phosphatidylserine decarboxylase family. PSD-B subfamily. Prokaryotic type I sub-subfamily. In terms of assembly, heterodimer of a large membrane-associated beta subunit and a small pyruvoyl-containing alpha subunit. Requires pyruvate as cofactor. Is synthesized initially as an inactive proenzyme. Formation of the active enzyme involves a self-maturation process in which the active site pyruvoyl group is generated from an internal serine residue via an autocatalytic post-translational modification. Two non-identical subunits are generated from the proenzyme in this reaction, and the pyruvate is formed at the N-terminus of the alpha chain, which is derived from the carboxyl end of the proenzyme. The autoendoproteolytic cleavage occurs by a canonical serine protease mechanism, in which the side chain hydroxyl group of the serine supplies its oxygen atom to form the C-terminus of the beta chain, while the remainder of the serine residue undergoes an oxidative deamination to produce ammonia and the pyruvoyl prosthetic group on the alpha chain. During this reaction, the Ser that is part of the protease active site of the proenzyme becomes the pyruvoyl prosthetic group, which constitutes an essential element of the active site of the mature decarboxylase.

Its subcellular location is the cell membrane. It catalyses the reaction a 1,2-diacyl-sn-glycero-3-phospho-L-serine + H(+) = a 1,2-diacyl-sn-glycero-3-phosphoethanolamine + CO2. It participates in phospholipid metabolism; phosphatidylethanolamine biosynthesis; phosphatidylethanolamine from CDP-diacylglycerol: step 2/2. In terms of biological role, catalyzes the formation of phosphatidylethanolamine (PtdEtn) from phosphatidylserine (PtdSer). The sequence is that of Phosphatidylserine decarboxylase proenzyme from Salmonella agona (strain SL483).